The chain runs to 37 residues: Large ribosomal subunit protein bL36 (37 aa).

The protein belongs to the bacterial ribosomal protein bL36 family.

The chain is Large ribosomal subunit protein bL36 from Marinomonas sp. (strain MWYL1).